The primary structure comprises 611 residues: Sensor histidine kinase WalK (611 aa).

Over 1-13 (MNKVGFFRSIQFK) the chain is Cytoplasmic. A helical transmembrane segment spans residues 14–34 (ITLIYVLLIIIAMQIIGVYFV). Over 35–182 (NQVEKSLISS…VFNQMKTINT (148 aa)) the chain is Extracellular. Residues 183 to 203 (ILASGTGLALVLTALLGIFLA) form a helical membrane-spanning segment. An HAMP domain is found at 204 to 256 (RTITHPLSDMRKQAMELAKGNFSRKVKKYGHDEIGQLATTFNHLTRELEDAQA). Residues 204–611 (RTITHPLSDM…EEQEDDWDEA (408 aa)) lie on the Cytoplasmic side of the membrane. One can recognise a PAS domain in the interval 263-324 (RKLASVIAYM…QENYTFEDLV (62 aa)). The PAC domain maps to 325–379 (EQQDSMLLEIERDDELTVLRVNFSVIQREHGKIDGLIAVIYDVTEQEKMDQERRE). One can recognise a Histidine kinase domain in the interval 383-602 (NVSHELRTPL…TITFTLPYKE (220 aa)). His-386 is subject to Phosphohistidine; by autocatalysis.

In terms of assembly, homodimer. Interacts with YycH and YycI. Post-translationally, autophosphorylated.

Its subcellular location is the cell membrane. It carries out the reaction ATP + protein L-histidine = ADP + protein N-phospho-L-histidine.. Functionally, member of the two-component regulatory system WalK/WalR involved in the regulation of the ftsAZ operon, the yocH and ykvT, cwlO, lytE, ydjM, yjeA, yoeB genes and the tagAB and tagDEF operons. Phosphorylates WalR. This is Sensor histidine kinase WalK from Bacillus subtilis (strain 168).